Consider the following 426-residue polypeptide: Serine--tRNA ligase (426 aa).

230 to 232 (TAE) provides a ligand contact to L-serine. 261 to 263 (RSE) provides a ligand contact to ATP. Glutamate 284 provides a ligand contact to L-serine. Residue 348–351 (EISS) coordinates ATP. Residue serine 384 participates in L-serine binding.

It belongs to the class-II aminoacyl-tRNA synthetase family. Type-1 seryl-tRNA synthetase subfamily. In terms of assembly, homodimer. The tRNA molecule binds across the dimer.

It localises to the cytoplasm. It catalyses the reaction tRNA(Ser) + L-serine + ATP = L-seryl-tRNA(Ser) + AMP + diphosphate + H(+). The enzyme catalyses tRNA(Sec) + L-serine + ATP = L-seryl-tRNA(Sec) + AMP + diphosphate + H(+). Its pathway is aminoacyl-tRNA biosynthesis; selenocysteinyl-tRNA(Sec) biosynthesis; L-seryl-tRNA(Sec) from L-serine and tRNA(Sec): step 1/1. In terms of biological role, catalyzes the attachment of serine to tRNA(Ser). Is also able to aminoacylate tRNA(Sec) with serine, to form the misacylated tRNA L-seryl-tRNA(Sec), which will be further converted into selenocysteinyl-tRNA(Sec). The polypeptide is Serine--tRNA ligase (Erythrobacter litoralis (strain HTCC2594)).